Here is a 759-residue protein sequence, read N- to C-terminus: Phosphoribosylformylglycinamidine synthase subunit PurL (759 aa).

The active site involves His-34. Tyr-37 serves as a coordination point for ATP. Glu-95 lines the Mg(2+) pocket. Substrate contacts are provided by residues 96-99 and Arg-118; that span reads SHNH. The Proton acceptor role is filled by His-97. Residue Asp-119 participates in Mg(2+) binding. Gln-243 contributes to the substrate binding site. Asp-271 is a binding site for Mg(2+). 315–317 contributes to the substrate binding site; that stretch reads ESQ. Residues 388 to 422 are disordered; it reads DGAPMNDLASESPTQPDRDLPDPEPSLDEAVESVV. 2 residues coordinate ATP: Asp-520 and Gly-557. Asn-558 contacts Mg(2+). Substrate is bound at residue Ser-560.

The protein belongs to the FGAMS family. As to quaternary structure, monomer. Part of the FGAM synthase complex composed of 1 PurL, 1 PurQ and 2 PurS subunits.

It is found in the cytoplasm. The enzyme catalyses N(2)-formyl-N(1)-(5-phospho-beta-D-ribosyl)glycinamide + L-glutamine + ATP + H2O = 2-formamido-N(1)-(5-O-phospho-beta-D-ribosyl)acetamidine + L-glutamate + ADP + phosphate + H(+). The protein operates within purine metabolism; IMP biosynthesis via de novo pathway; 5-amino-1-(5-phospho-D-ribosyl)imidazole from N(2)-formyl-N(1)-(5-phospho-D-ribosyl)glycinamide: step 1/2. Part of the phosphoribosylformylglycinamidine synthase complex involved in the purines biosynthetic pathway. Catalyzes the ATP-dependent conversion of formylglycinamide ribonucleotide (FGAR) and glutamine to yield formylglycinamidine ribonucleotide (FGAM) and glutamate. The FGAM synthase complex is composed of three subunits. PurQ produces an ammonia molecule by converting glutamine to glutamate. PurL transfers the ammonia molecule to FGAR to form FGAM in an ATP-dependent manner. PurS interacts with PurQ and PurL and is thought to assist in the transfer of the ammonia molecule from PurQ to PurL. This is Phosphoribosylformylglycinamidine synthase subunit PurL from Halorubrum lacusprofundi (strain ATCC 49239 / DSM 5036 / JCM 8891 / ACAM 34).